Here is a 68-residue protein sequence, read N- to C-terminus: Pleurocidin-like peptide WF4 (68 aa).

The signal sequence occupies residues 1–22 (MKFTATFLMMFIFVLMVEPGEC). A propeptide spanning residues 48–68 (GEQQDLDKRAVDEDPNVIVFE) is cleaved from the precursor.

Belongs to the pleurocidin family.

It is found in the secreted. In terms of biological role, antimicrobial peptide. This Pseudopleuronectes americanus (Winter flounder) protein is Pleurocidin-like peptide WF4 (ple4).